We begin with the raw amino-acid sequence, 212 residues long: Adenylate kinase (212 aa).

Position 10 to 15 (10 to 15 (GAGKGT)) interacts with ATP. Residues 30-59 (STGDMFRAAMANQTEMGRLAKSYIDKGELV) are NMP. AMP is bound by residues T31, R36, 57 to 59 (ELV), 86 to 89 (GYPR), and Q93. Residues 127–159 (GRIINRKTGETFHKVFNPPVDYKEEDYYQREDD) form an LID region. ATP-binding positions include R128 and 137 to 138 (TF). Residues R156 and R167 each contribute to the AMP site. Q195 contacts ATP.

It belongs to the adenylate kinase family. Monomer.

The protein localises to the cytoplasm. The catalysed reaction is AMP + ATP = 2 ADP. Its pathway is purine metabolism; AMP biosynthesis via salvage pathway; AMP from ADP: step 1/1. Functionally, catalyzes the reversible transfer of the terminal phosphate group between ATP and AMP. Plays an important role in cellular energy homeostasis and in adenine nucleotide metabolism. The chain is Adenylate kinase from Streptococcus agalactiae serotype III (strain NEM316).